The sequence spans 209 residues: Small ribosomal subunit protein uS4 (209 aa).

The S4 RNA-binding domain occupies 99-162; sequence RRLDNVVYRL…RESNKFQEMK (64 aa).

The protein belongs to the universal ribosomal protein uS4 family. Part of the 30S ribosomal subunit. Contacts protein S5. The interaction surface between S4 and S5 is involved in control of translational fidelity.

Functionally, one of the primary rRNA binding proteins, it binds directly to 16S rRNA where it nucleates assembly of the body of the 30S subunit. Its function is as follows. With S5 and S12 plays an important role in translational accuracy. This chain is Small ribosomal subunit protein uS4, found in Syntrophomonas wolfei subsp. wolfei (strain DSM 2245B / Goettingen).